Here is a 112-residue protein sequence, read N- to C-terminus: Thioredoxin-like protein YdfQ (112 aa).

Positions 1–107 (MKEMTGLHSL…LEQKLKRVYR (107 aa)) constitute a Thioredoxin domain. Cysteine 32 and cysteine 35 are oxidised to a cystine.

In Bacillus subtilis (strain 168), this protein is Thioredoxin-like protein YdfQ (ydfQ).